Reading from the N-terminus, the 208-residue chain is Protein-L-isoaspartate O-methyltransferase (208 aa).

Residue S59 is part of the active site.

The protein belongs to the methyltransferase superfamily. L-isoaspartyl/D-aspartyl protein methyltransferase family.

It localises to the cytoplasm. It carries out the reaction [protein]-L-isoaspartate + S-adenosyl-L-methionine = [protein]-L-isoaspartate alpha-methyl ester + S-adenosyl-L-homocysteine. Functionally, catalyzes the methyl esterification of L-isoaspartyl residues in peptides and proteins that result from spontaneous decomposition of normal L-aspartyl and L-asparaginyl residues. It plays a role in the repair and/or degradation of damaged proteins. This Aliivibrio salmonicida (strain LFI1238) (Vibrio salmonicida (strain LFI1238)) protein is Protein-L-isoaspartate O-methyltransferase.